Here is a 570-residue protein sequence, read N- to C-terminus: Proline--tRNA ligase (570 aa).

The protein belongs to the class-II aminoacyl-tRNA synthetase family. ProS type 1 subfamily. As to quaternary structure, homodimer.

Its subcellular location is the cytoplasm. The enzyme catalyses tRNA(Pro) + L-proline + ATP = L-prolyl-tRNA(Pro) + AMP + diphosphate. Its function is as follows. Catalyzes the attachment of proline to tRNA(Pro) in a two-step reaction: proline is first activated by ATP to form Pro-AMP and then transferred to the acceptor end of tRNA(Pro). As ProRS can inadvertently accommodate and process non-cognate amino acids such as alanine and cysteine, to avoid such errors it has two additional distinct editing activities against alanine. One activity is designated as 'pretransfer' editing and involves the tRNA(Pro)-independent hydrolysis of activated Ala-AMP. The other activity is designated 'posttransfer' editing and involves deacylation of mischarged Ala-tRNA(Pro). The misacylated Cys-tRNA(Pro) is not edited by ProRS. The chain is Proline--tRNA ligase from Shewanella sp. (strain MR-7).